A 304-amino-acid polypeptide reads, in one-letter code: Ribonuclease Z (304 aa).

The Zn(2+) site is built by His61, His63, Asp65, His66, His138, Asp206, and His265. Residue Asp65 is the Proton acceptor of the active site.

This sequence belongs to the RNase Z family. As to quaternary structure, homodimer. It depends on Zn(2+) as a cofactor.

The enzyme catalyses Endonucleolytic cleavage of RNA, removing extra 3' nucleotides from tRNA precursor, generating 3' termini of tRNAs. A 3'-hydroxy group is left at the tRNA terminus and a 5'-phosphoryl group is left at the trailer molecule.. Its function is as follows. Zinc phosphodiesterase, which displays some tRNA 3'-processing endonuclease activity. Probably involved in tRNA maturation, by removing a 3'-trailer from precursor tRNA. The chain is Ribonuclease Z from Lachnospira eligens (strain ATCC 27750 / DSM 3376 / VPI C15-48 / C15-B4) (Eubacterium eligens).